Reading from the N-terminus, the 161-residue chain is MGNFTVRATAGLMLASLSTLAHAAKLEDTAPYPKAEAGFTRQVIHLPQQAQEENFKVEILAGKTLEVDCNRQRLGGTLEEKNLEGWGYPFYRLEKVSGPMSTLMACPPGTQKKRVFVPVIGDGFTVRYNSKLPIVVYAPQDVEVRFRIWSASDKIGVAIPE.

The signal sequence occupies residues 1–23; the sequence is MGNFTVRATAGLMLASLSTLAHA. The cysteines at positions 69 and 106 are disulfide-linked.

This sequence belongs to the protease inhibitor I11 (ecotin) family. As to quaternary structure, homodimer.

It localises to the periplasm. General inhibitor of family S1 serine proteases. The chain is Ecotin from Pseudomonas fluorescens (strain Pf0-1).